The primary structure comprises 277 residues: Elongation factor Ts (277 aa).

The segment at 79–82 is involved in Mg(2+) ion dislocation from EF-Tu; the sequence is TDFV.

The protein belongs to the EF-Ts family.

Its subcellular location is the cytoplasm. Its function is as follows. Associates with the EF-Tu.GDP complex and induces the exchange of GDP to GTP. It remains bound to the aminoacyl-tRNA.EF-Tu.GTP complex up to the GTP hydrolysis stage on the ribosome. This Phytoplasma australiense protein is Elongation factor Ts.